The primary structure comprises 253 residues: rRNA adenine N-6-methyltransferase (253 aa).

6 residues coordinate S-adenosyl-L-methionine: N14, L16, G40, E61, D85, and N101. Residues 229–253 (CAREESTPRPYLPDCTPTTGSISSR) form a disordered region. Positions 244–253 (TPTTGSISSR) are enriched in polar residues.

The protein belongs to the class I-like SAM-binding methyltransferase superfamily. rRNA adenine N(6)-methyltransferase family.

Functionally, involved in erythromycin resistance. This is rRNA adenine N-6-methyltransferase (ermA) from Corynebacterium diphtheriae.